We begin with the raw amino-acid sequence, 661 residues long: UvrABC system protein B (661 aa).

The Helicase ATP-binding domain occupies 25-182 (KGLNNKKRSQ…NDLVNLQYER (158 aa)). 38–45 (GITGSGKT) is an ATP binding site. Positions 91–114 (YYDYYQPEAYIPKTDVFIEKDSSI) match the Beta-hairpin motif. Residues 430 to 592 (QVEDLVGEIQ…IIPKTINRTI (163 aa)) form the Helicase C-terminal domain. The region spanning 621–656 (KAHIDKLRKEMLKAASNLEFEQAAKLRDQLKTLEEA) is the UVR domain.

This sequence belongs to the UvrB family. In terms of assembly, forms a heterotetramer with UvrA during the search for lesions. Interacts with UvrC in an incision complex.

It localises to the cytoplasm. In terms of biological role, the UvrABC repair system catalyzes the recognition and processing of DNA lesions. A damage recognition complex composed of 2 UvrA and 2 UvrB subunits scans DNA for abnormalities. Upon binding of the UvrA(2)B(2) complex to a putative damaged site, the DNA wraps around one UvrB monomer. DNA wrap is dependent on ATP binding by UvrB and probably causes local melting of the DNA helix, facilitating insertion of UvrB beta-hairpin between the DNA strands. Then UvrB probes one DNA strand for the presence of a lesion. If a lesion is found the UvrA subunits dissociate and the UvrB-DNA preincision complex is formed. This complex is subsequently bound by UvrC and the second UvrB is released. If no lesion is found, the DNA wraps around the other UvrB subunit that will check the other stand for damage. This chain is UvrABC system protein B, found in Rickettsia bellii (strain OSU 85-389).